A 784-amino-acid polypeptide reads, in one-letter code: DNA repair and recombination protein RAD54-like (784 aa).

Residues 2–9 are required for chromatin remodeling, strand pairing activities and coupling of ATPase activity; it reads RRSLAPSQ. At Thr22 the chain carries Phosphothreonine. The Helicase ATP-binding domain maps to 169 to 344; that stretch reads EGKKGNFNGC…FSLVNFVNPE (176 aa). Residue 182 to 189 coordinates ATP; sequence DEMGLGKT. Positions 295–298 match the DEGH box motif; it reads DEGH. Residues 501–658 form the Helicase C-terminal domain; that stretch reads LLDFMLATIR…NNESAEKHFT (158 aa). The tract at residues 742–784 is disordered; sequence QAIKESEETKQEAEDTSIPAKSKRKRSTTPESDDCNDEDFKGF. Positions 745–754 are enriched in basic and acidic residues; the sequence is KESEETKQEA.

The protein belongs to the SNF2/RAD54 helicase family. In terms of assembly, interacts (via N-terminus) with spn-A/Rad51.

It is found in the nucleus. Its function is as follows. Involved in mitotic DNA repair and meiotic recombination. Functions in the recombinational DNA repair pathway. Essential for interhomolog gene conversion (GC), but may have a less important role in intersister GC than spn-A/Rad51. In the presence of DNA, spn-A/Rad51 enhances the ATPase activity of okr/Rad54. The protein is DNA repair and recombination protein RAD54-like of Drosophila willistoni (Fruit fly).